Reading from the N-terminus, the 186-residue chain is Superoxide dismutase [Cu-Zn] (186 aa).

Positions 1-20 are cleaved as a signal peptide; sequence MKKTVLALMFSCGMVASAFA. Residues His-79, His-81, and His-104 each coordinate Cu cation. The cysteines at positions 86 and 182 are disulfide-linked. Residues His-104, His-113, His-122, and Asp-125 each coordinate Zn(2+). His-160 contributes to the Cu cation binding site.

The protein belongs to the Cu-Zn superoxide dismutase family. Homodimer. It depends on Cu cation as a cofactor. Zn(2+) serves as cofactor.

Its subcellular location is the periplasm. The catalysed reaction is 2 superoxide + 2 H(+) = H2O2 + O2. Destroys radicals which are normally produced within the cells and which are toxic to biological systems. This is Superoxide dismutase [Cu-Zn] (sodC) from Pasteurella multocida (strain Pm70).